The chain runs to 60 residues: Large ribosomal subunit protein uL30 (60 aa).

This sequence belongs to the universal ribosomal protein uL30 family. As to quaternary structure, part of the 50S ribosomal subunit.

The protein is Large ribosomal subunit protein uL30 of Leuconostoc mesenteroides subsp. mesenteroides (strain ATCC 8293 / DSM 20343 / BCRC 11652 / CCM 1803 / JCM 6124 / NCDO 523 / NBRC 100496 / NCIMB 8023 / NCTC 12954 / NRRL B-1118 / 37Y).